A 752-amino-acid polypeptide reads, in one-letter code: Photosystem I P700 chlorophyll a apoprotein A1 (752 aa).

The next 8 membrane-spanning stretches (helical) occupy residues isoleucine 73 to alanine 96, leucine 159 to histidine 182, methionine 198 to isoleucine 222, threonine 294 to tyrosine 312, tryptophan 349 to tyrosine 372, leucine 388 to valine 414, alanine 436 to histidine 458, and phenylalanine 533 to valine 551. Positions 575 and 584 each coordinate [4Fe-4S] cluster. Transmembrane regions (helical) follow at residues histidine 591–tryptophan 612 and leucine 666–phenylalanine 688. Residue histidine 677 coordinates chlorophyll a'. Positions 685 and 693 each coordinate chlorophyll a. Residue tryptophan 694 participates in phylloquinone binding. Residues alanine 726 to alanine 746 traverse the membrane as a helical segment.

The protein belongs to the PsaA/PsaB family. As to quaternary structure, the PsaA/B heterodimer binds the P700 chlorophyll special pair and subsequent electron acceptors. PSI consists of a core antenna complex that captures photons, and an electron transfer chain that converts photonic excitation into a charge separation. The eukaryotic PSI reaction center is composed of at least 11 subunits. The cofactor is P700 is a chlorophyll a/chlorophyll a' dimer, A0 is one or more chlorophyll a, A1 is one or both phylloquinones and FX is a shared 4Fe-4S iron-sulfur center..

It localises to the plastid. It is found in the chloroplast thylakoid membrane. It carries out the reaction reduced [plastocyanin] + hnu + oxidized [2Fe-2S]-[ferredoxin] = oxidized [plastocyanin] + reduced [2Fe-2S]-[ferredoxin]. In terms of biological role, psaA and PsaB bind P700, the primary electron donor of photosystem I (PSI), as well as the electron acceptors A0, A1 and FX. PSI is a plastocyanin/cytochrome c6-ferredoxin oxidoreductase, converting photonic excitation into a charge separation, which transfers an electron from the donor P700 chlorophyll pair to the spectroscopically characterized acceptors A0, A1, FX, FA and FB in turn. Oxidized P700 is reduced on the lumenal side of the thylakoid membrane by plastocyanin or cytochrome c6. The protein is Photosystem I P700 chlorophyll a apoprotein A1 of Gracilaria tenuistipitata var. liui (Red alga).